The following is a 66-amino-acid chain: Large ribosomal subunit protein bL33c (66 aa).

It belongs to the bacterial ribosomal protein bL33 family.

The protein resides in the plastid. It is found in the chloroplast. This chain is Large ribosomal subunit protein bL33c, found in Daucus carota (Wild carrot).